We begin with the raw amino-acid sequence, 209 residues long: Uracil phosphoribosyltransferase (209 aa).

Residues arginine 79, arginine 104, and 131–139 (DPMLATGVS) contribute to the 5-phospho-alpha-D-ribose 1-diphosphate site. Uracil-binding positions include isoleucine 194 and 199–201 (GDA). Aspartate 200 is a 5-phospho-alpha-D-ribose 1-diphosphate binding site.

It belongs to the UPRTase family. Mg(2+) is required as a cofactor.

The catalysed reaction is UMP + diphosphate = 5-phospho-alpha-D-ribose 1-diphosphate + uracil. It functions in the pathway pyrimidine metabolism; UMP biosynthesis via salvage pathway; UMP from uracil: step 1/1. With respect to regulation, allosterically activated by GTP. In terms of biological role, catalyzes the conversion of uracil and 5-phospho-alpha-D-ribose 1-diphosphate (PRPP) to UMP and diphosphate. This chain is Uracil phosphoribosyltransferase, found in Thermotoga maritima (strain ATCC 43589 / DSM 3109 / JCM 10099 / NBRC 100826 / MSB8).